The sequence spans 234 residues: Eosinophil granule major basic protein 2 (234 aa).

The N-terminal stretch at 1 to 15 is a signal peptide; that stretch reads MKLLLLLALLVGAVS. Residues 16-115 constitute a propeptide, acidic; sequence TRHLNVDTSS…VKFEGSPGCK (100 aa). Positions 26-96 are disordered; sequence LQSLQGEESL…SSELDMGPED (71 aa). S69 carries an O-linked (Xyl...) (glycosaminoglycan) serine glycan. Residues 71–94 are compositionally biased toward acidic residues; sequence SEDDPEEEEEEKEMESSSELDMGP. A C-type lectin domain is found at 133 to 234; that stretch reads SVCQRCFRGN…GVRRAFSCSY (102 aa). Cystine bridges form between C135/C232 and C209/C224.

Nitrated.

The protein localises to the cytoplasmic granule. Its function is as follows. MBP may play some important roles in the allergic reactions and inflammations, since MBP is capable of releasing histamine from mast cells and damaging the epithelial cells of bronchial tubes. Antiparasitic and antibiotic. This Cavia porcellus (Guinea pig) protein is Eosinophil granule major basic protein 2 (MBP2).